The sequence spans 526 residues: WRKY transcription factor 72A (526 aa).

2 stretches are compositionally biased toward basic and acidic residues: residues 40–52 (KERK…DDNS) and 60–76 (LTGD…KADM). Disordered regions lie at residues 40–76 (KERK…KADM) and 170–200 (SSTK…QTWP). Residues 62–106 (GDKKDDQLESAKADMEEVMEENQRLKKHLDKIMKDYRNLQMQFHE) are a coiled coil. A compositionally biased stretch (low complexity) spans 170–185 (SSTKSSPSNLSPENSL). The WRKY DNA-binding region spans 232 to 298 (CDTPTMNDGC…YEGTHNHPLP (67 aa)).

Belongs to the WRKY group II-b family. As to expression, expressed in roots, trichomes and fruits.

It localises to the nucleus. In terms of biological role, transcription activator involved in the transcriptional regulation of terpene biosynthesis in glandular trichomes. Binds to the promoter of the linalool synthase TPS5 and promotes TPS5 gene transactivation. In association with WRKY72B, contributes to basal defense against root-knot nematodes (RKNs) and potato aphids, as well as Mi-1-mediated gene-for-gene resistance to these pests. Both WRKY72A and WRKY72B are not required for gene-for-gene resistance mediated by Pto, another tomato R gene. The sequence is that of WRKY transcription factor 72A from Solanum lycopersicum (Tomato).